The following is a 123-amino-acid chain: MNVTENALLFKCGSKGYINQTYTPTEIYNCGVAEGKKTAKEKNPTYSIFYDTFLTGQPAESPETFTCGSHGFTNASYVASDFYACGFLQGKGTETNAGIHNTRPSHSLAKFTILFMLVLYTIV.

This is an uncharacterized protein from Saccharomyces cerevisiae (strain ATCC 204508 / S288c) (Baker's yeast).